We begin with the raw amino-acid sequence, 761 residues long: Protein spire homolog 1 (761 aa).

Disordered stretches follow at residues 1 to 23 and 160 to 183; these read MTDG…ARPE and DCPD…AEVS. A KIND domain is found at 36–223; it reads LCLEEILTLY…RALYAETKEL (188 aa). Positions 160 to 180 are enriched in acidic residues; it reads DCPDEGYEATEEEDEGEEENA. Residues 218-246 adopt a coiled-coil conformation; the sequence is AETKELRTFLEKIKSAKENLRKMEGETEE. WH2 domains lie at 295-313 and 359-376; these read PYEM…LRKV and LHER…LRPV. 2 disordered regions span residues 375-406 and 419-539; these read PVSP…DIPD and ANGT…KSLA. The span at 469 to 480 shows a compositional bias: low complexity; the sequence is SSSSISTSLVED. Over residues 504–520 the composition is skewed to basic and acidic residues; that stretch reads PDKRIAPQRRHSIEKEA. The segment at 557-577 is spir-box; it reads LTLTVEEVMHIRQVLVKAELE. Disordered regions lie at residues 630–694 and 728–761; these read PSKP…DELE and STKR…IKEV. Positions 636–647 are enriched in low complexity; the sequence is SLPISSLGPSIL. Over residues 682 to 693 the composition is skewed to basic and acidic residues; sequence KHGDRSSSKDEL. The span at 728–739 shows a compositional bias: basic residues; sequence STKRARLHRRTH. Residues 740 to 749 show a composition bias toward low complexity; the sequence is SVYSSSTSSS.

The protein belongs to the spire family.

It localises to the cytoplasm. It is found in the cytoskeleton. The protein resides in the cytosol. Its subcellular location is the cleavage furrow. The protein localises to the perinuclear region. It localises to the cell membrane. It is found in the cytoplasmic vesicle membrane. Acts as an actin nucleation factor, remains associated with the slow-growing pointed end of the new filament. Involved in intracellular vesicle transport along actin fibers, providing a novel link between actin cytoskeleton dynamics and intracellular transport. Required for asymmetric spindle positioning and asymmetric cell division during meiosis. Required for normal formation of the cleavage furrow and for polar body extrusion during female germ cell meiosis. Also acts in the nucleus: together with FMN2, promotes assembly of nuclear actin filaments in response to DNA damage in order to facilitate movement of chromatin and repair factors after DNA damage. In addition, promotes innate immune signaling downstream of dsRNA sensing. Mechanistically, contributes to IRF3 phosphorylation and activation downstream of MAVS and upstream of TBK1. This Danio rerio (Zebrafish) protein is Protein spire homolog 1.